The sequence spans 641 residues: Choline O-acetyltransferase (641 aa).

Residue S17 is modified to Phosphoserine. H335 acts as the Proton acceptor in catalysis. A Phosphoserine modification is found at S366. CoA-binding positions include 413 to 425 (GKTFIKKQKCSPD), S451, and Q552. Residues 615 to 641 (CSSRQPADSKPPTAKERARGPSQAKQS) form a disordered region.

This sequence belongs to the carnitine/choline acetyltransferase family.

The catalysed reaction is choline + acetyl-CoA = acetylcholine + CoA. Catalyzes the reversible synthesis of acetylcholine (ACh) from acetyl CoA and choline at cholinergic synapses. The polypeptide is Choline O-acetyltransferase (Chat) (Mus musculus (Mouse)).